The primary structure comprises 664 residues: DNA ligase (664 aa).

NAD(+) contacts are provided by residues 31–35, 80–81, and Glu-110; these read DSTYD and SL. The active-site N6-AMP-lysine intermediate is the Lys-112. NAD(+) is bound by residues Arg-133, Glu-167, Lys-282, and Lys-306. The Zn(2+) site is built by Cys-400, Cys-403, Cys-418, and Cys-423. The 82-residue stretch at 583–664 folds into the BRCT domain; the sequence is QSNAPLAGKT…LLEELAKYEG (82 aa).

Belongs to the NAD-dependent DNA ligase family. LigA subfamily. It depends on Mg(2+) as a cofactor. The cofactor is Mn(2+).

It carries out the reaction NAD(+) + (deoxyribonucleotide)n-3'-hydroxyl + 5'-phospho-(deoxyribonucleotide)m = (deoxyribonucleotide)n+m + AMP + beta-nicotinamide D-nucleotide.. In terms of biological role, DNA ligase that catalyzes the formation of phosphodiester linkages between 5'-phosphoryl and 3'-hydroxyl groups in double-stranded DNA using NAD as a coenzyme and as the energy source for the reaction. It is essential for DNA replication and repair of damaged DNA. The protein is DNA ligase of Exiguobacterium sibiricum (strain DSM 17290 / CCUG 55495 / CIP 109462 / JCM 13490 / 255-15).